Consider the following 441-residue polypeptide: Squalene synthase (441 aa).

The next 2 helical transmembrane spans lie at 293 to 313 (SFQF…LVFG) and 420 to 440 (FKFN…YWYA).

The protein belongs to the phytoene/squalene synthase family. Mg(2+) serves as cofactor.

The protein localises to the endoplasmic reticulum membrane. It carries out the reaction 2 (2E,6E)-farnesyl diphosphate + NADPH + H(+) = squalene + 2 diphosphate + NADP(+). The catalysed reaction is 2 (2E,6E)-farnesyl diphosphate + NADH + H(+) = squalene + 2 diphosphate + NAD(+). Its pathway is terpene metabolism; lanosterol biosynthesis; lanosterol from farnesyl diphosphate: step 1/3. In terms of biological role, catalyzes the condensation of 2 two farnesyl pyrophosphate moieties to form squalene. It is the first committed enzyme of the sterol biosynthesis pathway. Required for the biosynthesis of ergosterol. The sequence is that of Squalene synthase (ERG9) from Eremothecium gossypii (strain ATCC 10895 / CBS 109.51 / FGSC 9923 / NRRL Y-1056) (Yeast).